A 95-amino-acid polypeptide reads, in one-letter code: Acylphosphatase (95 aa).

Residues 7–93 enclose the Acylphosphatase-like domain; sequence TWQLFAHGRV…QLFDRFDWLP (87 aa). Residues Arg22 and Asn40 contribute to the active site.

Belongs to the acylphosphatase family.

The enzyme catalyses an acyl phosphate + H2O = a carboxylate + phosphate + H(+). The chain is Acylphosphatase (acyP) from Cupriavidus metallidurans (strain ATCC 43123 / DSM 2839 / NBRC 102507 / CH34) (Ralstonia metallidurans).